A 316-amino-acid chain; its full sequence is Glutathione synthetase (316 aa).

The ATP-grasp domain occupies 124 to 311; it reads NEKLAALLFP…IAGLLFDAIE (188 aa). 151–208 is an ATP binding site; that stretch reads FVLAHGQAVLKPLDGMGGRSIFRSGTGDPNLNVILETLTDGGRKLTLAQRFIPDITAG. 2 residues coordinate Mg(2+): Glu282 and Asn284.

The protein belongs to the prokaryotic GSH synthase family. It depends on Mg(2+) as a cofactor. The cofactor is Mn(2+).

The catalysed reaction is gamma-L-glutamyl-L-cysteine + glycine + ATP = glutathione + ADP + phosphate + H(+). Its pathway is sulfur metabolism; glutathione biosynthesis; glutathione from L-cysteine and L-glutamate: step 2/2. This chain is Glutathione synthetase, found in Xanthomonas campestris pv. campestris (strain ATCC 33913 / DSM 3586 / NCPPB 528 / LMG 568 / P 25).